The primary structure comprises 757 residues: Probable serine/threonine-protein kinase pknA2 (757 aa).

In terms of domain architecture, Protein kinase spans 14–274 (YRIVRNIAEG…DGAAAAEELS (261 aa)). ATP contacts are provided by residues 20–28 (IAEGGMATV) and lysine 43. The active-site Proton acceptor is the aspartate 140. The interval 344–387 (DTGGAADVNPPAPPVAPTTALDSSTPADASAPHKTQIMAQSGSE) is disordered. PASTA domains are found at residues 466-539 (DANA…VVSK), 545-614 (TIPK…TLSK), and 615-681 (GPMP…VISK).

Belongs to the protein kinase superfamily. Ser/Thr protein kinase family.

It carries out the reaction L-seryl-[protein] + ATP = O-phospho-L-seryl-[protein] + ADP + H(+). The catalysed reaction is L-threonyl-[protein] + ATP = O-phospho-L-threonyl-[protein] + ADP + H(+). The chain is Probable serine/threonine-protein kinase pknA2 (pknA2) from Bifidobacterium longum (strain NCC 2705).